The primary structure comprises 340 residues: Arginine N-succinyltransferase subunit beta (340 aa).

It belongs to the succinylarginine dihydrolase family. As to quaternary structure, heterotetramer of two alpha and two beta subunits.

The enzyme catalyses succinyl-CoA + L-arginine = N(2)-succinyl-L-arginine + CoA + H(+). It participates in amino-acid degradation; L-arginine degradation via AST pathway; L-glutamate and succinate from L-arginine: step 1/5. This Pseudomonas aeruginosa (strain ATCC 15692 / DSM 22644 / CIP 104116 / JCM 14847 / LMG 12228 / 1C / PRS 101 / PAO1) protein is Arginine N-succinyltransferase subunit beta (aruG).